Reading from the N-terminus, the 279-residue chain is Vomeronasal type-1 receptor A8 (279 aa).

The Extracellular portion of the chain corresponds to 1–19 (MNKDHTLYCSVYIRNAFFS). Residues 20 to 40 (EIGIGISANSCLLLFHTFMFI) traverse the membrane as a helical segment. Over 41–49 (RGHRPRLTD) the chain is Cytoplasmic. Residues 50-70 (LPIGFVALIHLVMLLLAAYIT) form a helical membrane-spanning segment. Residues 71 to 93 (EDFFMSSGGWDDITCKLVIFLHR) lie on the Extracellular side of the membrane. Cysteines 85 and 172 form a disulfide. The helical transmembrane segment at 94–114 (FFRSLSVCATCLLSVFQAIIL) threads the bilayer. Residues 115–134 (CPQSSHLAKLKQNSPHQLSY) lie on the Cytoplasmic side of the membrane. Residues 135-155 (FFIFLSIFYTSISSQILIAAI) traverse the membrane as a helical segment. Topologically, residues 156-159 (PTQN) are extracellular. An N-linked (GlcNAc...) asparagine glycan is attached at N159. The helical transmembrane segment at 160–180 (ITFVNLIYITNSCSFLPLSSS) threads the bilayer. Residues 181 to 187 (MQHTFST) lie on the Cytoplasmic side of the membrane. The helical transmembrane segment at 188 to 208 (LLTFRNVFVIGLMGLSTCYMA) threads the bilayer. The Extracellular portion of the chain corresponds to 209 to 238 (TLLCRHKTRSQRLQNSKLSPKATPEQRALR). A helical membrane pass occupies residues 239 to 259 (TILMLMSFFLLMSTFDSIISY). Residues 260 to 279 (SRTIITGKSTALLCPDSCRS) lie on the Cytoplasmic side of the membrane.

It belongs to the G-protein coupled receptor 1 family. As to expression, expressed in a subset of sensory neurons located in the apical layer of the vomeronasal organ.

Its subcellular location is the cell membrane. Putative pheromone receptor implicated in the regulation of social and reproductive behavior. The polypeptide is Vomeronasal type-1 receptor A8 (Mus musculus (Mouse)).